The sequence spans 287 residues: 5'-3' exonuclease (287 aa).

The 99-residue stretch at isoleucine 172–lysine 270 folds into the 5'-3' exonuclease domain.

5'-3' exonuclease acting preferentially on double-stranded DNA. The chain is 5'-3' exonuclease (pol) from Buchnera aphidicola subsp. Schizaphis graminum (strain Sg).